We begin with the raw amino-acid sequence, 528 residues long: Capsule biosynthesis protein CapD proenzyme (528 aa).

An N-terminal signal peptide occupies residues 1–26; that stretch reads MNSFKWGKKIILFCLIVSLMGGIGVS. The Nucleophile role is filled by Thr352. Residues Thr352, 429 to 432, and Arg520 contribute to the poly-gamma-D-glutamate site; that span reads GGNR.

Belongs to the gamma-glutamyltransferase family. This enzyme consists of two polypeptide chains, which are synthesized in precursor form from a single polypeptide. Post-translationally, cleaved by autocatalysis into a large and a small subunit.

It functions in the pathway capsule biogenesis; capsule polysaccharide biosynthesis. Functionally, transpeptidase that cleaves the poly-gamma-D-glutamate capsule and catalyzes the formation of an amide bond with the side-chain amino group of meso-diaminopimelic acid (m-DAP) in the peptidoglycan scaffold. Degradation of the high-molecular weight capsule (H-capsule) to the lower-molecular weight capsule (L-capsule), which is released from the bacterial cell surface. The production of L-capsule is essential to mediate escape from host defenses. This chain is Capsule biosynthesis protein CapD proenzyme (capD), found in Bacillus anthracis.